Reading from the N-terminus, the 119-residue chain is MVKLAFSRELRLLTPAHFTFVFQQPQRAGTPQITILGRLNSLGHPRIGLTVAKKNVRRAHERNRIKRLTRESFRLRQHELPAMDFVVVAKKGVADLDNRALSEALEKLWRRHCRLARGS.

This sequence belongs to the RnpA family. As to quaternary structure, consists of a catalytic RNA component (M1 or rnpB) and a protein subunit.

The enzyme catalyses Endonucleolytic cleavage of RNA, removing 5'-extranucleotides from tRNA precursor.. RNaseP catalyzes the removal of the 5'-leader sequence from pre-tRNA to produce the mature 5'-terminus. It can also cleave other RNA substrates such as 4.5S RNA. The protein component plays an auxiliary but essential role in vivo by binding to the 5'-leader sequence and broadening the substrate specificity of the ribozyme. In Salmonella paratyphi A (strain AKU_12601), this protein is Ribonuclease P protein component.